The chain runs to 69 residues: Large ribosomal subunit protein uL29 (69 aa).

This sequence belongs to the universal ribosomal protein uL29 family.

The polypeptide is Large ribosomal subunit protein uL29 (Staphylococcus haemolyticus (strain JCSC1435)).